A 177-amino-acid polypeptide reads, in one-letter code: Hypoxanthine phosphoribosyltransferase (177 aa).

Residues R43 and G44 each contribute to the diphosphate site. A GMP-binding site is contributed by E99. E99 is an IMP binding site. The Mg(2+) site is built by E99 and D100. Catalysis depends on D103, which acts as the Proton acceptor. Residues 103–108 (DSGKTL), K131, and D159 each bind GMP. IMP-binding positions include 103–108 (DSGKTL) and K131. R165 contributes to the diphosphate binding site.

It belongs to the purine/pyrimidine phosphoribosyltransferase family. As to quaternary structure, homotetramer. Mg(2+) is required as a cofactor.

It localises to the cytoplasm. The enzyme catalyses IMP + diphosphate = hypoxanthine + 5-phospho-alpha-D-ribose 1-diphosphate. The catalysed reaction is GMP + diphosphate = guanine + 5-phospho-alpha-D-ribose 1-diphosphate. It participates in purine metabolism; IMP biosynthesis via salvage pathway; IMP from hypoxanthine: step 1/1. Functionally, purine salvage pathway enzyme which catalyzes the transfer of the ribosyl-5-phosphate group from 5-phospho-alpha-D-ribose 1-diphosphate (PRPP) to the N9 position of hypoxanthine to yield IMP (inosine 5'-monophosphate). To a lesser extent, can also act on guanine leading to GMP, but shows a highly less efficient activity with xanthine. In Buchnera aphidicola subsp. Schizaphis graminum (strain Sg), this protein is Hypoxanthine phosphoribosyltransferase (hpt).